The primary structure comprises 237 residues: Neural retina-specific leucine zipper protein (237 aa).

Residues lysine 20 and lysine 24 each participate in a glycyl lysine isopeptide (Lys-Gly) (interchain with G-Cter in SUMO) cross-link. The segment at 23–57 (VKREPSEGRPGPPTASLGSTPYSSVPPSPTFSEPG) is disordered. Residues 30–93 (GRPGPPTASL…AGEALGLSPE (64 aa)) form a minimal transactivation domain (MTD) region. The segment at 159–185 (RLKQRRRTLKNRGYAQACRSKRLQQRR) is basic motif. The bZIP domain maps to 159–222 (RLKQRRRTLK…DLYKARCDRL (64 aa)). The interval 187 to 208 (LEAERARLAAQLDALRAEVARL) is leucine-zipper.

It belongs to the bZIP family. As to quaternary structure, interacts with FIZ1; this interaction represses transactivation. Interacts (via the leucine-zipper domain) with CRX. Post-translationally, phosphorylated. Disumoylated at Lys-20. Sumoylation modulates the transcriptional activity of NRL on RHO and NR2E3 promoters, and is required for normal rod differentiation. As to expression, expressed in the brain and the retina. Expressed strongly in rod and cone cells (at protein level).

Its subcellular location is the cytoplasm. It is found in the nucleus. Acts as a transcriptional activator which regulates the expression of several rod-specific genes, including RHO and PDE6B. Also functions as a transcriptional coactivator, stimulating transcription mediated by the transcription factor CRX and NR2E3. Binds to the rhodopsin promoter in a sequence-specific manner. This is Neural retina-specific leucine zipper protein (NRL) from Homo sapiens (Human).